The primary structure comprises 433 residues: 3-phosphoshikimate 1-carboxyvinyltransferase (433 aa).

3 residues coordinate 3-phosphoshikimate: Lys-22, Ser-23, and Arg-27. Lys-22 provides a ligand contact to phosphoenolpyruvate. Gly-95 and Arg-123 together coordinate phosphoenolpyruvate. Positions 167, 169, 315, and 342 each coordinate 3-phosphoshikimate. Gln-169 provides a ligand contact to phosphoenolpyruvate. The active-site Proton acceptor is the Asp-315. Arg-346 and Arg-387 together coordinate phosphoenolpyruvate.

Belongs to the EPSP synthase family. In terms of assembly, monomer.

Its subcellular location is the cytoplasm. The enzyme catalyses 3-phosphoshikimate + phosphoenolpyruvate = 5-O-(1-carboxyvinyl)-3-phosphoshikimate + phosphate. It functions in the pathway metabolic intermediate biosynthesis; chorismate biosynthesis; chorismate from D-erythrose 4-phosphate and phosphoenolpyruvate: step 6/7. Its function is as follows. Catalyzes the transfer of the enolpyruvyl moiety of phosphoenolpyruvate (PEP) to the 5-hydroxyl of shikimate-3-phosphate (S3P) to produce enolpyruvyl shikimate-3-phosphate and inorganic phosphate. The protein is 3-phosphoshikimate 1-carboxyvinyltransferase of Legionella pneumophila (strain Corby).